Consider the following 293-residue polypeptide: Ribosomal protein L11 methyltransferase (293 aa).

S-adenosyl-L-methionine is bound by residues T145, G166, D188, and N230.

It belongs to the methyltransferase superfamily. PrmA family.

It is found in the cytoplasm. The catalysed reaction is L-lysyl-[protein] + 3 S-adenosyl-L-methionine = N(6),N(6),N(6)-trimethyl-L-lysyl-[protein] + 3 S-adenosyl-L-homocysteine + 3 H(+). Its function is as follows. Methylates ribosomal protein L11. The polypeptide is Ribosomal protein L11 methyltransferase (Actinobacillus succinogenes (strain ATCC 55618 / DSM 22257 / CCUG 43843 / 130Z)).